We begin with the raw amino-acid sequence, 356 residues long: UDP-N-acetylglucosamine--N-acetylmuramyl-(pentapeptide) pyrophosphoryl-undecaprenol N-acetylglucosamine transferase (356 aa).

UDP-N-acetyl-alpha-D-glucosamine is bound by residues Ser198 and Gln289.

Belongs to the glycosyltransferase 28 family. MurG subfamily.

The protein resides in the cell membrane. The catalysed reaction is Mur2Ac(oyl-L-Ala-gamma-D-Glu-L-Lys-D-Ala-D-Ala)-di-trans,octa-cis-undecaprenyl diphosphate + UDP-N-acetyl-alpha-D-glucosamine = beta-D-GlcNAc-(1-&gt;4)-Mur2Ac(oyl-L-Ala-gamma-D-Glu-L-Lys-D-Ala-D-Ala)-di-trans,octa-cis-undecaprenyl diphosphate + UDP + H(+). Its pathway is cell wall biogenesis; peptidoglycan biosynthesis. Cell wall formation. Catalyzes the transfer of a GlcNAc subunit on undecaprenyl-pyrophosphoryl-MurNAc-pentapeptide (lipid intermediate I) to form undecaprenyl-pyrophosphoryl-MurNAc-(pentapeptide)GlcNAc (lipid intermediate II). The chain is UDP-N-acetylglucosamine--N-acetylmuramyl-(pentapeptide) pyrophosphoryl-undecaprenol N-acetylglucosamine transferase from Streptococcus thermophilus (strain ATCC BAA-491 / LMD-9).